Consider the following 197-residue polypeptide: Guanylate kinase (197 aa).

One can recognise a Guanylate kinase-like domain in the interval 6-191 (SKLIILSGPS…CVAQIEKIIS (186 aa)). 13–20 (GPSGVGKG) contributes to the ATP binding site.

It belongs to the guanylate kinase family.

Its subcellular location is the cytoplasm. The catalysed reaction is GMP + ATP = GDP + ADP. Its function is as follows. Essential for recycling GMP and indirectly, cGMP. In Mesomycoplasma hyopneumoniae (strain 232) (Mycoplasma hyopneumoniae), this protein is Guanylate kinase.